The sequence spans 148 residues: Transcriptional regulator MraZ (148 aa).

2 SpoVT-AbrB domains span residues 5–51 (ATSL…PLPA) and 80–123 (AEDV…SMEA).

This sequence belongs to the MraZ family. As to quaternary structure, forms oligomers.

Its subcellular location is the cytoplasm. The protein localises to the nucleoid. This is Transcriptional regulator MraZ from Methylobacillus flagellatus (strain ATCC 51484 / DSM 6875 / VKM B-1610 / KT).